Reading from the N-terminus, the 137-residue chain is Large ribosomal subunit protein bL21 (137 aa).

The disordered stretch occupies residues 1–26; sequence MADTKTATPATDAEEATATPPAAAPS.

Belongs to the bacterial ribosomal protein bL21 family. Part of the 50S ribosomal subunit. Contacts protein L20.

Functionally, this protein binds to 23S rRNA in the presence of protein L20. This chain is Large ribosomal subunit protein bL21, found in Parasynechococcus marenigrum (strain WH8102).